The primary structure comprises 419 residues: L-cysteine:1D-myo-inositol 2-amino-2-deoxy-alpha-D-glucopyranoside ligase (419 aa).

A disordered region spans residues 1-20 (MRSWSVPEVPALPGRGPRVH). Cys44 is a binding site for Zn(2+). L-cysteinyl-5'-AMP-binding positions include 44 to 47 (CGIT), Thr59, and 82 to 84 (NVT). The short motif at 46-56 (ITPYDATHLGH) is the 'HIGH' region element. The short motif at 191 to 196 (ERGGDP) is the 'ERGGDP' region element. Trp232 contributes to the L-cysteinyl-5'-AMP binding site. Cys236 is a Zn(2+) binding site. 254 to 256 (GSD) contributes to the L-cysteinyl-5'-AMP binding site. His261 is a binding site for Zn(2+). Val289 is an L-cysteinyl-5'-AMP binding site. The 'KMSKS' region motif lies at 295-299 (KMSKS).

The protein belongs to the class-I aminoacyl-tRNA synthetase family. MshC subfamily. As to quaternary structure, monomer. Zn(2+) is required as a cofactor.

The enzyme catalyses 1D-myo-inositol 2-amino-2-deoxy-alpha-D-glucopyranoside + L-cysteine + ATP = 1D-myo-inositol 2-(L-cysteinylamino)-2-deoxy-alpha-D-glucopyranoside + AMP + diphosphate + H(+). In terms of biological role, catalyzes the ATP-dependent condensation of GlcN-Ins and L-cysteine to form L-Cys-GlcN-Ins. This chain is L-cysteine:1D-myo-inositol 2-amino-2-deoxy-alpha-D-glucopyranoside ligase, found in Kineococcus radiotolerans (strain ATCC BAA-149 / DSM 14245 / SRS30216).